Consider the following 179-residue polypeptide: Large ribosomal subunit protein uL5 (179 aa).

The protein belongs to the universal ribosomal protein uL5 family. As to quaternary structure, part of the 50S ribosomal subunit; part of the 5S rRNA/L5/L18/L25 subcomplex. Contacts the 5S rRNA and the P site tRNA. Forms a bridge to the 30S subunit in the 70S ribosome.

This is one of the proteins that bind and probably mediate the attachment of the 5S RNA into the large ribosomal subunit, where it forms part of the central protuberance. In the 70S ribosome it contacts protein S13 of the 30S subunit (bridge B1b), connecting the 2 subunits; this bridge is implicated in subunit movement. Contacts the P site tRNA; the 5S rRNA and some of its associated proteins might help stabilize positioning of ribosome-bound tRNAs. This is Large ribosomal subunit protein uL5 from Proteus mirabilis (strain HI4320).